A 174-amino-acid chain; its full sequence is Regenerating islet-derived protein 3-gamma (174 aa).

An N-terminal signal peptide occupies residues 1–26 (MLPRVALTTMSWMLLSSLMLLSQVQG). Positions 27–37 (EDAKEDVPTSR) are excised as a propeptide. Cystine bridges form between Cys40–Cys51, Cys68–Cys170, and Cys145–Cys162. The 125-residue stretch at 47 to 171 (YGSYCYALFS…CISELPYVCK (125 aa)) folds into the C-type lectin domain. The tract at residues 103–118 (WIGLHDPTLGQEPNRG) is sufficient to activate EXTL3. Residue His107 coordinates Zn(2+). An EPN motif is present at residues 114–116 (EPN). The Zn(2+) site is built by Glu121 and His144.

Forms a hexameric membrane-permeabilizing oligomeric pore on membrane phospholipids. The hexamer is formed by three dimers related by helical symmetry. Forms filaments, filamentation traps pore complexes and limits damage to host cells. Interacts with EXTL3. Proteolytic processing by trypsin removes an inhibitory N-terminal propeptide and is essential for peptidoglycan binding and antibacterial activity. Expressed in injured skeletal muscles and sciatic nerve (at protein level). Expressed in the pancreas. Expression increases during the acute phase of pancreatitis.

The protein resides in the secreted. The protein localises to the cytoplasm. Its activity is regulated as follows. Lipopolysaccharide inhibits pore-forming activity, explaining why is bactericidal for Gram-positive but not Gram-negative bacteria. Functionally, bactericidal C-type lectin which acts exclusively against Gram-positive bacteria and mediates bacterial killing by binding to surface-exposed carbohydrate moieties of peptidoglycan. Restricts bacterial colonization of the intestinal epithelial surface and consequently limits activation of adaptive immune responses by the microbiota. Acts as a hormone in response to different stimuli like anti-inflammatory signals, such as IL17A, or gut microbiome. Is secreted by different cell types to activate its receptor EXTL3 and induce cell specific signaling pathways. Induced by IL17A in keratinocytes, regulates keratinocyte proliferation and differentiation after skin injury. In parallel, inhibits skin inflammation through the inhibition of inflammatory cytokines such as IL6 and TNF. Induced by IL22 in lung epithelial cells, inhibits cytokine production and regulates allergic airway inflammation. Induced in small intestine by inulin-enriched diet and Lactobacillus gasseri enriched microbiome, plays a role in the improvement of gut barrier function, the regulation of energy balance and glucose levels. Modulates microbiota composition in duodenal contents. Produced by nociceptor in response to endotoxins, prevents endotoxic death by targeting kynurenine pathway in microglia. In terms of biological role, has bacteriostatic activity. Its function is as follows. Has bactericidal activity against L.monocytogenes and methicillin-resistant S.aureus. The sequence is that of Regenerating islet-derived protein 3-gamma from Rattus norvegicus (Rat).